Consider the following 229-residue polypeptide: Potassium/proton antiporter CemA (229 aa).

3 helical membrane-spanning segments follow: residues 7–27 (FTPLFYLASIVFLPWWISFSV), 107–127 (ILHFSTNIICFIILSGYSILG), and 189–209 (IISGLVSTFPVILDTIFKYWI).

Belongs to the CemA family.

The protein resides in the plastid. It localises to the chloroplast inner membrane. It carries out the reaction K(+)(in) + H(+)(out) = K(+)(out) + H(+)(in). In terms of biological role, contributes to K(+)/H(+) antiport activity by supporting proton efflux to control proton extrusion and homeostasis in chloroplasts in a light-dependent manner to modulate photosynthesis. Prevents excessive induction of non-photochemical quenching (NPQ) under continuous-light conditions. Indirectly promotes efficient inorganic carbon uptake into chloroplasts. The polypeptide is Potassium/proton antiporter CemA (Nicotiana sylvestris (Wood tobacco)).